The primary structure comprises 181 residues: UPF0302 protein LMOf2365_1950 (181 aa).

It belongs to the UPF0302 family.

The polypeptide is UPF0302 protein LMOf2365_1950 (Listeria monocytogenes serotype 4b (strain F2365)).